The chain runs to 378 residues: MKFTIQKDRLVESVQDVLKAVSSRTTIPILTGIKIVASDDGVSFTGSDSDISIESFIPKEEGDKEIVTIEQPGSIVLQARFFSEIVKKLPMATVEIEVQNQYLTIIRSGKAEFNLNGLDADEYPHLPQIEEHHAIQIPTDLLKNLIRQTVFAVSTSETRPILTGVNWKVEQSELLCTATDSHRLALRKAKLDIPEDRSYNVVIPGKSLTELSKILDDNQELVDIVITETQVLFKAKNVLFFSRLLDGNYPDTTSLIPQDSKTEIIVNTKEFLQAIDRASLLAREGRNNVVKLSAKPAESIEISSNSPEIGKVVEAIVADQIEGEELNISFSPKYMLDALKVLEGAEIRVSFTGAMRPFLIRTPNDETIVQLILPVRTY.

The protein belongs to the beta sliding clamp family. Forms a ring-shaped head-to-tail homodimer around DNA which binds and tethers DNA polymerases and other proteins to the DNA. The DNA replisome complex has a single clamp-loading complex (3 tau and 1 each of delta, delta', psi and chi subunits) which binds 3 Pol III cores (1 core on the leading strand and 2 on the lagging strand) each with a beta sliding clamp dimer. Additional proteins in the replisome are other copies of gamma, psi and chi, Ssb, DNA helicase and RNA primase. Interacts with YabA, and via YabA, with DnaA. During sporulation probably interacts with SirA.

It localises to the cytoplasm. Its subcellular location is the nucleoid. In terms of biological role, confers DNA tethering and processivity to DNA polymerases and other proteins. Acts as a clamp, forming a ring around DNA (a reaction catalyzed by the clamp-loading complex) which diffuses in an ATP-independent manner freely and bidirectionally along dsDNA. Initially characterized for its ability to contact the catalytic subunit of DNA polymerase III (Pol III), a complex, multichain enzyme responsible for most of the replicative synthesis in bacteria; Pol III exhibits 3'-5' exonuclease proofreading activity. The beta chain is required for initiation of replication as well as for processivity of DNA replication. Overexpression in vivo stimulates inititation of DNA replication from oriC. Increased levels of DnaN remove YabA from its association with DnaA on the chromosome, allowing DnaA to bind to its targets. Its interaction with DnaA probably serves as a sink to prevent excessive replication initiation. The protein is Beta sliding clamp of Bacillus subtilis (strain 168).